Reading from the N-terminus, the 294-residue chain is Glyceraldehyde-3-phosphate dehydrogenase (294 aa).

Residues Asp19, Arg63, and Thr105 each coordinate NAD(+). D-glyceraldehyde 3-phosphate is bound by residues 134–136 and Thr165; that span reads SCT. Catalysis depends on Cys135, which acts as the Nucleophile. Positions 169-188 are disordered; sequence KTVDGPSHKDWRGGRGASQN. D-glyceraldehyde 3-phosphate-binding positions include 194-195 and Arg217; that span reads TG.

This sequence belongs to the glyceraldehyde-3-phosphate dehydrogenase family. As to quaternary structure, homotetramer.

Its subcellular location is the cytoplasm. The enzyme catalyses D-glyceraldehyde 3-phosphate + phosphate + NAD(+) = (2R)-3-phospho-glyceroyl phosphate + NADH + H(+). The protein operates within carbohydrate degradation; glycolysis; pyruvate from D-glyceraldehyde 3-phosphate: step 1/5. Functionally, catalyzes the oxidative phosphorylation of glyceraldehyde 3-phosphate (G3P) to 1,3-bisphosphoglycerate (BPG) using the cofactor NAD. The first reaction step involves the formation of a hemiacetal intermediate between G3P and a cysteine residue, and this hemiacetal intermediate is then oxidized to a thioester, with concomitant reduction of NAD to NADH. The reduced NADH is then exchanged with the second NAD, and the thioester is attacked by a nucleophilic inorganic phosphate to produce BPG. The protein is Glyceraldehyde-3-phosphate dehydrogenase (gap) of Citrobacter freundii.